The sequence spans 111 residues: MFHLYLLLVFETRYTCLMKCSISTCSYRWLRRREWFCLIYSGCCRKILVIEGLQRSDVAFLFTRRTIMHYVPFRGLFCASCVGYFSIRCCSRCEHFCTKTPTKSFGTEAWS.

The signal sequence occupies residues M1–L17. The short motif at R28–R31 is the RxLR element.

Belongs to the RxLR effector family.

It is found in the secreted. The protein localises to the host nucleus. Functionally, secreted effector that acts as an elicitor that induces cell death in host plant cells. The sequence is that of Secreted RxLR effector protein 82 from Plasmopara viticola (Downy mildew of grapevine).